Consider the following 1164-residue polypeptide: DNA-directed RNA polymerase (1164 aa).

Belongs to the RNA polymerase beta chain family. The DNA-dependent RNA polymerase used for intermediate and late genes expression consists of eight subunits 147 kDa, 133 kDa, 35 kDa, 30 kDa, 22 kDa, 19 kDa, 18 kDa and 7 kDa totalling more than 500 kDa in mass. The same holoenzyme, with the addition of the transcription-specificity factor RAP94, is used for early gene expression.

It is found in the virion. The catalysed reaction is RNA(n) + a ribonucleoside 5'-triphosphate = RNA(n+1) + diphosphate. Part of the DNA-dependent RNA polymerase which catalyzes the transcription of viral DNA into RNA using the four ribonucleoside triphosphates as substrates. Responsible for the transcription of early, intermediate and late genes. DNA-dependent RNA polymerase associates with the early transcription factor (ETF), itself composed of OPG118 and OPG133, thereby allowing the early genes transcription. Late transcription, and probably also intermediate transcription, require newly synthesized RNA polymerase. This chain is DNA-directed RNA polymerase (OPG151), found in Monkeypox virus.